Here is a 123-residue protein sequence, read N- to C-terminus: Homeobox protein CDX-1 (123 aa).

A DNA-binding region (homeobox) is located at residues 5 to 64 (KDKYRVVYTDHQRLELEKEFHYSRYITIRRKSELAANLGLTERQVKIWFQNRRAKERKVN). The tract at residues 8–29 (YRVVYTDHQRLELEKEFHYSRY) is interaction with DNA. Residues 47 to 58 (RQVKIWFQNRRA) form an interaction with 5-mCpG DNA region. Over residues 57-68 (RAKERKVNKKKQ) the composition is skewed to basic residues. The disordered stretch occupies residues 57 to 123 (RAKERKVNKK…PVPVKEEFLP (67 aa)).

The protein belongs to the Caudal homeobox family. As to expression, intestinal epithelium.

It is found in the nucleus. Plays a role in transcriptional regulation. Involved in activated KRAS-mediated transcriptional activation of PRKD1 in colorectal cancer (CRC) cells. Binds to the PRKD1 promoter in colorectal cancer (CRC) cells. Could play a role in the terminal differentiation of the intestine. Binds preferentially to methylated DNA. This Rattus norvegicus (Rat) protein is Homeobox protein CDX-1 (Cdx1).